A 140-amino-acid polypeptide reads, in one-letter code: Auxin-responsive protein IAA26 (140 aa).

The tract at residues Met-1–Ser-40 is disordered. Positions Leu-14–Pro-18 match the EAR-like (transcriptional repression) motif. Over residues Arg-24–Gly-33 the composition is skewed to basic residues. The PB1 domain occupies Ala-45–Ala-130.

The protein belongs to the Aux/IAA family. In terms of assembly, homodimers and heterodimers. As to expression, expressed in roots, seedlings and flowers.

The protein resides in the nucleus. In terms of biological role, aux/IAA proteins are short-lived transcriptional factors that function as repressors of early auxin response genes at low auxin concentrations. This chain is Auxin-responsive protein IAA26 (IAA26), found in Oryza sativa subsp. japonica (Rice).